Consider the following 382-residue polypeptide: Lipid-A-disaccharide synthase (382 aa).

It belongs to the LpxB family.

The enzyme catalyses 2-N,3-O-bis[(3R)-3-hydroxytetradecanoyl]-alpha-D-glucosaminyl 1-phosphate + UDP-2-N,3-O-bis[(3R)-3-hydroxytetradecanoyl]-alpha-D-glucosamine = lipid A disaccharide (E. coli) + UDP + H(+). It carries out the reaction a lipid X + a UDP-2-N,3-O-bis[(3R)-3-hydroxyacyl]-alpha-D-glucosamine = a lipid A disaccharide + UDP + H(+). Its pathway is glycolipid biosynthesis; lipid IV(A) biosynthesis; lipid IV(A) from (3R)-3-hydroxytetradecanoyl-[acyl-carrier-protein] and UDP-N-acetyl-alpha-D-glucosamine: step 5/6. Functionally, condensation of UDP-2,3-diacylglucosamine and 2,3-diacylglucosamine-1-phosphate to form lipid A disaccharide, a precursor of lipid A, a phosphorylated glycolipid that anchors the lipopolysaccharide to the outer membrane of the cell. This chain is Lipid-A-disaccharide synthase, found in Shigella boydii serotype 18 (strain CDC 3083-94 / BS512).